Here is a 369-residue protein sequence, read N- to C-terminus: Putative protein FAM10A5 (369 aa).

The segment at 38–98 (MGGKVPPATQ…IEPDTDAPQE (61 aa)) is disordered. Over residues 49 to 73 (AKSEENTKEEKPDSKKVEEDLKADE) the composition is skewed to basic and acidic residues. Acidic residues predominate over residues 89–98 (IEPDTDAPQE). TPR repeat units follow at residues 114–147 (ANDK…NPRL), 149–181 (ILYA…NPDS), and 183–215 (QPYK…DYDE). The span at 256–272 (KAQEEQERAQREEEARR) shows a compositional bias: basic and acidic residues. Residues 256 to 300 (KAQEEQERAQREEEARRQSGAHYGPFPGGFPGGMPGNFPGGMPGM) form a disordered region. Over residues 281-300 (FPGGFPGGMPGNFPGGMPGM) the composition is skewed to gly residues. One can recognise an STI1 domain in the interval 319-358 (DPEALAAMQDPEVMVAFQDVAQNPANMSKYQSNPKVMNLI). Residue Ser-346 is modified to Phosphoserine. Residues Lys-353 and Lys-360 each carry the N6-acetyllysine modification.

The protein belongs to the FAM10 family.

The protein localises to the cytoplasm. The protein is Putative protein FAM10A5 (ST13P5) of Homo sapiens (Human).